The primary structure comprises 358 residues: MGKKIVFTGGGTVGHVTLNLILIPKFIKDGWEVHYIGDKNGIEHEQINQSGLDITFHSIATGKLRRYFSWQNMLDVFKVGVGVLQSIAIIAKLRPQALFSKGGFVSVPPVVAARLLKVPVFVHESDLSMGLANKIAYKFATIMYTTFEQSKDLIKTKHIGAVTKVMDCKKSFENTDLTSIKEAFDPNLKTLLFIGGSAGAKVFNDFITQTPELEEKYNVINISGDSSLNRLKKNLYRVDYVTDLYQPLMNLADVVVTRGGSNTIFELVAMKKLHLIIPLGREASRGDQLENAAYFEEKGYALQLPESELNINTLEKQINLLISNSESYEKNMSQSSEIKSQDEFYQLLIDDMAKVTKG.

UDP-N-acetyl-alpha-D-glucosamine is bound by residues Ser197 and Gln288.

Belongs to the glycosyltransferase 28 family. MurG subfamily.

Its subcellular location is the cell membrane. The enzyme catalyses Mur2Ac(oyl-L-Ala-gamma-D-Glu-L-Lys-D-Ala-D-Ala)-di-trans,octa-cis-undecaprenyl diphosphate + UDP-N-acetyl-alpha-D-glucosamine = beta-D-GlcNAc-(1-&gt;4)-Mur2Ac(oyl-L-Ala-gamma-D-Glu-L-Lys-D-Ala-D-Ala)-di-trans,octa-cis-undecaprenyl diphosphate + UDP + H(+). The protein operates within cell wall biogenesis; peptidoglycan biosynthesis. Cell wall formation. Catalyzes the transfer of a GlcNAc subunit on undecaprenyl-pyrophosphoryl-MurNAc-pentapeptide (lipid intermediate I) to form undecaprenyl-pyrophosphoryl-MurNAc-(pentapeptide)GlcNAc (lipid intermediate II). This Streptococcus agalactiae serotype Ia (strain ATCC 27591 / A909 / CDC SS700) protein is UDP-N-acetylglucosamine--N-acetylmuramyl-(pentapeptide) pyrophosphoryl-undecaprenol N-acetylglucosamine transferase.